Consider the following 89-residue polypeptide: Small ribosomal subunit protein uS15 (89 aa).

The interval 1–24 is disordered; that stretch reads MSLNAETKAGIVEKYRRDPSDTGS. Basic and acidic residues predominate over residues 11–20; sequence IVEKYRRDPS.

It belongs to the universal ribosomal protein uS15 family. As to quaternary structure, part of the 30S ribosomal subunit. Forms a bridge to the 50S subunit in the 70S ribosome, contacting the 23S rRNA.

One of the primary rRNA binding proteins, it binds directly to 16S rRNA where it helps nucleate assembly of the platform of the 30S subunit by binding and bridging several RNA helices of the 16S rRNA. In terms of biological role, forms an intersubunit bridge (bridge B4) with the 23S rRNA of the 50S subunit in the ribosome. The protein is Small ribosomal subunit protein uS15 of Thioalkalivibrio sulfidiphilus (strain HL-EbGR7).